The chain runs to 364 residues: tRNA 2-selenouridine synthase (364 aa).

Positions 14-137 (LIADTPIIDV…LRQTAIQATI (124 aa)) constitute a Rhodanese domain. C97 acts as the S-selanylcysteine intermediate in catalysis.

Belongs to the SelU family. Monomer.

The catalysed reaction is 5-methylaminomethyl-2-thiouridine(34) in tRNA + selenophosphate + (2E)-geranyl diphosphate + H2O + H(+) = 5-methylaminomethyl-2-selenouridine(34) in tRNA + (2E)-thiogeraniol + phosphate + diphosphate. The enzyme catalyses 5-methylaminomethyl-2-thiouridine(34) in tRNA + (2E)-geranyl diphosphate = 5-methylaminomethyl-S-(2E)-geranyl-thiouridine(34) in tRNA + diphosphate. It carries out the reaction 5-methylaminomethyl-S-(2E)-geranyl-thiouridine(34) in tRNA + selenophosphate + H(+) = 5-methylaminomethyl-2-(Se-phospho)selenouridine(34) in tRNA + (2E)-thiogeraniol. It catalyses the reaction 5-methylaminomethyl-2-(Se-phospho)selenouridine(34) in tRNA + H2O = 5-methylaminomethyl-2-selenouridine(34) in tRNA + phosphate. Involved in the post-transcriptional modification of the uridine at the wobble position (U34) of tRNA(Lys), tRNA(Glu) and tRNA(Gln). Catalyzes the conversion of 2-thiouridine (S2U-RNA) to 2-selenouridine (Se2U-RNA). Acts in a two-step process involving geranylation of 2-thiouridine (S2U) to S-geranyl-2-thiouridine (geS2U) and subsequent selenation of the latter derivative to 2-selenouridine (Se2U) in the tRNA chain. The protein is tRNA 2-selenouridine synthase of Escherichia coli (strain SMS-3-5 / SECEC).